Consider the following 396-residue polypeptide: Elongation factor Tu (396 aa).

The region spanning 10 to 206 is the tr-type G domain; the sequence is KPHVNVGTIG…ALDSYIPTPE (197 aa). The interval 19–26 is G1; sequence GHVDHGKT. 19-26 is a GTP binding site; it reads GHVDHGKT. Thr-26 serves as a coordination point for Mg(2+). Residues 60-64 are G2; the sequence is GITIN. Residues 81-84 form a G3 region; that stretch reads DCPG. GTP contacts are provided by residues 81-85 and 136-139; these read DCPGH and NKCD. Residues 136 to 139 form a G4 region; that stretch reads NKCD. The tract at residues 174–176 is G5; the sequence is SAL.

Belongs to the TRAFAC class translation factor GTPase superfamily. Classic translation factor GTPase family. EF-Tu/EF-1A subfamily. Monomer.

Its subcellular location is the cytoplasm. It carries out the reaction GTP + H2O = GDP + phosphate + H(+). GTP hydrolase that promotes the GTP-dependent binding of aminoacyl-tRNA to the A-site of ribosomes during protein biosynthesis. This chain is Elongation factor Tu, found in Aromatoleum aromaticum (strain DSM 19018 / LMG 30748 / EbN1) (Azoarcus sp. (strain EbN1)).